A 184-amino-acid chain; its full sequence is Probable maltose O-acetyltransferase (184 aa).

Position 84 (asparagine 84) interacts with acetyl-CoA. The active-site Proton donor/acceptor is the histidine 114. Acetyl-CoA is bound by residues glycine 141, serine 159, 164 to 165, arginine 179, and lysine 182; that span reads TK.

Belongs to the transferase hexapeptide repeat family. In terms of assembly, homodimer.

It carries out the reaction D-maltose + acetyl-CoA = 1-O-acetylmaltose + CoA. Catalyzes the CoA-dependent transfer of an acetyl group to maltose and other sugars. Acetylates glucose exclusively at the C6 position and maltose at the C6 position of the non-reducing end glucosyl moiety. Is able to acetylate maltooligosaccharides. This is Probable maltose O-acetyltransferase (maa) from Bacillus subtilis (strain 168).